The chain runs to 366 residues: 5-hydroxytryptamine receptor 1F (366 aa).

Residues 1–24 lie on the Extracellular side of the membrane; it reads MDFLNSSDQNLTSEELLHRMPSKI. N-linked (GlcNAc...) asparagine glycosylation is found at N5 and N10. The chain crosses the membrane as a helical span at residues 25–49; it reads LVSLTLSGLALMTTTINSLVIAAII. The Cytoplasmic portion of the chain corresponds to 50–59; it reads VTRKLHHPAN. A helical membrane pass occupies residues 60-81; sequence YLICSLAVTDFLVAVLVMPFSI. Topologically, residues 82-96 are extracellular; sequence VYIVRESWIMGQVLC. The cysteines at positions 96 and 172 are disulfide-linked. The chain crosses the membrane as a helical span at residues 97 to 119; that stretch reads DIWLSVDIICCTCSILHLSAIAL. Serotonin is bound by residues D103 and C107. A DRY motif; important for ligand-induced conformation changes motif is present at residues 120 to 122; it reads DRY. Residues 120–139 lie on the Cytoplasmic side of the membrane; sequence DRYRAITDAVEYARKRTPKQ. The chain crosses the membrane as a helical span at residues 140 to 159; the sequence is AGIMITIVWIISVFISMPPL. Over 160-178 the chain is Extracellular; it reads FWRHQGTSRDDECIIKHDH. The helical transmembrane segment at 179–202 threads the bilayer; it reads IVSTIYSTFGAFYIPLVLILILYY. Over 203-291 the chain is Cytoplasmic; it reads KIYKAAKTLY…KISGTRERKA (89 aa). The helical transmembrane segment at 292–315 threads the bilayer; that stretch reads ATTLGLILGAFVICWLPFFVKELV. Residues 316-327 lie on the Extracellular side of the membrane; that stretch reads VNVCEKCKISEE. The chain crosses the membrane as a helical span at residues 328–350; it reads MANFLAWLGYLNSLINPLIYTIF. The NPxxY motif; important for ligand-induced conformation changes and signaling motif lies at 343 to 347; the sequence is NPLIY. Topologically, residues 351–366 are cytoplasmic; sequence NEDFKKAFQKLVRCQY.

This sequence belongs to the G-protein coupled receptor 1 family.

The protein resides in the cell membrane. Its function is as follows. G-protein coupled receptor for 5-hydroxytryptamine (serotonin). Also functions as a receptor for various alkaloids and psychoactive substances. Ligand binding causes a conformation change that triggers signaling via guanine nucleotide-binding proteins (G proteins) and modulates the activity of downstream effectors, such as adenylate cyclase. HTR1F is coupled to G(i)/G(o) G alpha proteins and mediates inhibitory neurotransmission by inhibiting adenylate cyclase activity. The polypeptide is 5-hydroxytryptamine receptor 1F (HTR1F) (Cavia porcellus (Guinea pig)).